A 371-amino-acid polypeptide reads, in one-letter code: N-acetyldiaminopimelate deacetylase (371 aa).

D68 is an active-site residue. E127 functions as the Proton acceptor in the catalytic mechanism.

Belongs to the peptidase M20A family. N-acetyldiaminopimelate deacetylase subfamily.

The enzyme catalyses N-acetyl-(2S,6S)-2,6-diaminopimelate + H2O = (2S,6S)-2,6-diaminopimelate + acetate. It participates in amino-acid biosynthesis; L-lysine biosynthesis via DAP pathway; LL-2,6-diaminopimelate from (S)-tetrahydrodipicolinate (acetylase route): step 3/3. Catalyzes the conversion of N-acetyl-diaminopimelate to diaminopimelate and acetate. The polypeptide is N-acetyldiaminopimelate deacetylase (Listeria monocytogenes serotype 4a (strain HCC23)).